An 847-amino-acid polypeptide reads, in one-letter code: Follistatin-related protein 5 (847 aa).

The N-terminal stretch at 1 to 20 is a signal peptide; it reads MFKCWSVVLVLGFIFLESEG. Positions 83 to 135 constitute a Kazal-like domain; the sequence is GQAECACMDLCKRHYKPVCGSDGEFYENHCEVHRAACLKKQKITIVHNEDCFF. Cystine bridges form between cysteine 89–cysteine 119, cysteine 93–cysteine 112, and cysteine 101–cysteine 133. EF-hand domains follow at residues 175 to 210 and 211 to 246; these read RKKL…EELG and KDLF…QVIQ. Positions 188, 190, 192, 199, 226, 228, 230, 232, and 237 each coordinate Ca(2+). Ig-like domains follow at residues 250-337 and 341-426; these read PEDQ…IFQV and PVIR…EDIS. 2 disulfides stabilise this stretch: cysteine 270–cysteine 321 and cysteine 362–cysteine 413. 2 N-linked (GlcNAc...) asparagine glycosylation sites follow: asparagine 318 and asparagine 394.

It localises to the secreted. The protein is Follistatin-related protein 5 (FSTL5) of Homo sapiens (Human).